Reading from the N-terminus, the 250-residue chain is Lectin 1 (250 aa).

The N-linked (GlcNAc...) asparagine; partial glycan is linked to asparagine 119. Mn(2+)-binding residues include glutamate 128 and aspartate 130. Ca(2+)-binding residues include aspartate 130, tyrosine 132, asparagine 138, and aspartate 141. Mn(2+)-binding residues include aspartate 141 and histidine 146.

This sequence belongs to the leguminous lectin family.

Its function is as follows. Di-N-acetylchitobiose specific lectin. In Laburnum alpinum (Scotch laburnum), this protein is Lectin 1.